A 195-amino-acid polypeptide reads, in one-letter code: Putative manganese efflux pump MntP (195 aa).

The next 6 membrane-spanning stretches (helical) occupy residues 3-23, 40-60, 68-88, 106-126, 132-152, and 165-185; these read LSAT…ASVG, GLIF…LGLL, WDHW…VLAG, VLIA…VGLA, ILHA…IGML, and AEII…YSHI.

Belongs to the MntP (TC 9.B.29) family.

Its subcellular location is the cell inner membrane. Probably functions as a manganese efflux pump. The protein is Putative manganese efflux pump MntP of Sodalis glossinidius (strain morsitans).